A 753-amino-acid polypeptide reads, in one-letter code: Transcription factor SOX-30 (753 aa).

Disordered stretches follow at residues 1-45 and 137-161; these read MERA…TLSA and AKKQ…TGPR. Over residues 7-23 the composition is skewed to pro residues; that stretch reads EPPPQPRPLRPAPPPLP. Positions 337-405 form a DNA-binding region, HMG box; that stretch reads VKRPMNAFMV…KHREEFPGWV (69 aa). Disordered stretches follow at residues 514-575 and 726-753; these read TGPS…SPCP and PTST…LRDL. 2 stretches are compositionally biased toward polar residues: residues 531-563 and 726-739; these read TVKQ…STIQ and PTST…VNVT.

Interacts with CTNNB1, competitively inhibiting CTNNB1-TCF7L2/TCF4 interaction.

Its subcellular location is the nucleus. The protein localises to the cytoplasm. In terms of biological role, acts both as a transcriptional activator and a repressor. Binds to the DNA sequence 5'-ACAAT-3' and shows a preference for guanine residues surrounding this core motif. Binds to its own promoter and activates its own transcription. Required to activate the expression of postmeiotic genes involved in spermiogenesis. Binds to the promoter region of CTNNB1 and represses its transcription which leads to inhibition of Wnt signaling. Also inhibits Wnt signaling by binding to the CTNNB1 protein, preventing interaction of CTNNB1 with TCF7L2/TCF4. The sequence is that of Transcription factor SOX-30 (SOX30) from Homo sapiens (Human).